Reading from the N-terminus, the 403-residue chain is S-adenosylmethionine synthase (403 aa).

141–146 lines the ATP pocket; that stretch reads GQGSVD.

It belongs to the AdoMet synthase 2 family. Requires Mg(2+) as cofactor.

The enzyme catalyses L-methionine + ATP + H2O = S-adenosyl-L-methionine + phosphate + diphosphate. It functions in the pathway amino-acid biosynthesis; S-adenosyl-L-methionine biosynthesis; S-adenosyl-L-methionine from L-methionine: step 1/1. Catalyzes the formation of S-adenosylmethionine from methionine and ATP. This Methanococcus aeolicus (strain ATCC BAA-1280 / DSM 17508 / OCM 812 / Nankai-3) protein is S-adenosylmethionine synthase.